Here is a 268-residue protein sequence, read N- to C-terminus: Shikimate kinase (268 aa).

Residue 70-80 (PSGYGLKSSSA) participates in ATP binding.

Belongs to the GHMP kinase family. Archaeal shikimate kinase subfamily.

It is found in the cytoplasm. The catalysed reaction is shikimate + ATP = 3-phosphoshikimate + ADP + H(+). The protein operates within metabolic intermediate biosynthesis; chorismate biosynthesis; chorismate from D-erythrose 4-phosphate and phosphoenolpyruvate: step 5/7. The protein is Shikimate kinase (aroK) of Thermoplasma acidophilum (strain ATCC 25905 / DSM 1728 / JCM 9062 / NBRC 15155 / AMRC-C165).